We begin with the raw amino-acid sequence, 435 residues long: Xylose isomerase (435 aa).

Residues aspartate 306 and aspartate 308 each coordinate Mg(2+).

The protein belongs to the xylose isomerase family. As to quaternary structure, homotetramer. Mg(2+) serves as cofactor.

Its subcellular location is the cytoplasm. It catalyses the reaction alpha-D-xylose = alpha-D-xylulofuranose. The sequence is that of Xylose isomerase from Brucella melitensis biotype 2 (strain ATCC 23457).